A 357-amino-acid polypeptide reads, in one-letter code: Glutamine synthetase cytosolic isozyme 1-2 (357 aa).

The GS beta-grasp domain maps to 19–99 (IIAEYIWVGG…VMCDCYTPQG (81 aa)). Residues 106 to 357 (KRHSAAKIFS…AETTLLWKQN (252 aa)) enclose the GS catalytic domain.

Belongs to the glutamine synthetase family. As to quaternary structure, homooctamer. Expressed in roots and at lower levels in leaf blades and spikelets (rice flower).

The protein resides in the cytoplasm. It catalyses the reaction L-glutamate + NH4(+) + ATP = L-glutamine + ADP + phosphate + H(+). Its function is as follows. High-affinity glutamine synthetase involved in ammonium assimilation. Plays an important role in the primary assimilation of ammonium taken up by roots. Plays a role in maintaining nitrogen metabolic balance during ammonium assimilation, thus controlling plant growth and development. Reassimilates ammonium generated during lignification within developing tillers, which is probably required for the outgrowth of axillary buds. Required for nitrogen-dependent biosynthesis of cytokinin. Active cytokinin in axillary bud meristem is required for axillary bud outgrowth and necessary for tillering. The sequence is that of Glutamine synthetase cytosolic isozyme 1-2 from Oryza sativa subsp. japonica (Rice).